Consider the following 741-residue polypeptide: uncharacterized protein (741 aa).

Helical transmembrane passes span 34 to 54, 76 to 96, 120 to 140, 156 to 176, and 187 to 207; these read WLLW…LLII, LIIP…FING, LAVL…FVSL, LSVF…LIII, and LLLL…AFSI. Positions 404–423 are enriched in basic and acidic residues; the sequence is EAEEKERQEKEEKEKAEKDN. Disordered stretches follow at residues 404 to 473 and 555 to 647; these read EAEE…FRPR and QKEL…ENAK. Positions 424–439 are enriched in polar residues; it reads GNGQDSNKVNSVSTEP. Basic and acidic residues-rich tracts occupy residues 445–465 and 555–573; these read SDAD…DSSK and QKEL…DQKS. Residues 623–643 are compositionally biased toward acidic residues; sequence DNTDESEDKQSEEEEKFDEEI. Helical transmembrane passes span 655–675 and 715–735; these read AFFN…ENGA and VIIA…FFAY.

This sequence to M.pneumoniae MPN_333.

It localises to the cell membrane. This is an uncharacterized protein from Mycoplasma pneumoniae (strain ATCC 29342 / M129 / Subtype 1) (Mycoplasmoides pneumoniae).